We begin with the raw amino-acid sequence, 62 residues long: Inner membrane protein p12 (62 aa).

Residues 16–36 (LLIVAIIVVIMAIMLYYFWWM) traverse the membrane as a helical segment.

It belongs to the asfivirus inner membrane protein p12 family. As to quaternary structure, homomultimer; disulfide-linked. Post-translationally, not glycosylated.

Its subcellular location is the virion membrane. The protein is Inner membrane protein p12 of African swine fever virus (isolate Tick/Malawi/Lil 20-1/1983) (ASFV).